A 270-amino-acid polypeptide reads, in one-letter code: 3-methyl-2-oxobutanoate hydroxymethyltransferase (270 aa).

Residues D41 and D80 each coordinate Mg(2+). 3-methyl-2-oxobutanoate-binding positions include 41–42 (DS), D80, and K109. Mg(2+) is bound at residue E111. The active-site Proton acceptor is the E178.

This sequence belongs to the PanB family. In terms of assembly, homodecamer; pentamer of dimers. Mg(2+) serves as cofactor.

The protein resides in the cytoplasm. It carries out the reaction 3-methyl-2-oxobutanoate + (6R)-5,10-methylene-5,6,7,8-tetrahydrofolate + H2O = 2-dehydropantoate + (6S)-5,6,7,8-tetrahydrofolate. The protein operates within cofactor biosynthesis; (R)-pantothenate biosynthesis; (R)-pantoate from 3-methyl-2-oxobutanoate: step 1/2. Functionally, catalyzes the reversible reaction in which hydroxymethyl group from 5,10-methylenetetrahydrofolate is transferred onto alpha-ketoisovalerate to form ketopantoate. The chain is 3-methyl-2-oxobutanoate hydroxymethyltransferase from Thermotoga sp. (strain RQ2).